The sequence spans 469 residues: 3-isopropylmalate dehydratase large subunit (469 aa).

Residues Cys-347, Cys-407, and Cys-410 each coordinate [4Fe-4S] cluster.

This sequence belongs to the aconitase/IPM isomerase family. LeuC type 1 subfamily. As to quaternary structure, heterodimer of LeuC and LeuD. The cofactor is [4Fe-4S] cluster.

It carries out the reaction (2R,3S)-3-isopropylmalate = (2S)-2-isopropylmalate. Its pathway is amino-acid biosynthesis; L-leucine biosynthesis; L-leucine from 3-methyl-2-oxobutanoate: step 2/4. Functionally, catalyzes the isomerization between 2-isopropylmalate and 3-isopropylmalate, via the formation of 2-isopropylmaleate. This chain is 3-isopropylmalate dehydratase large subunit, found in Photorhabdus laumondii subsp. laumondii (strain DSM 15139 / CIP 105565 / TT01) (Photorhabdus luminescens subsp. laumondii).